Consider the following 438-residue polypeptide: Probable trafficking protein particle complex subunit 13 homolog (438 aa).

It belongs to the TRAPPC13 family.

The protein is Probable trafficking protein particle complex subunit 13 homolog of Drosophila melanogaster (Fruit fly).